Reading from the N-terminus, the 469-residue chain is GDP-fucose protein O-fucosyltransferase 2 (469 aa).

An N-terminal signal peptide occupies residues 1 to 18 (MKFIIVLLLFFFFKVIDR). GDP-beta-L-fucose is bound by residues 56–60 (GEGFN), 277–279 (HLR), and 373–374 (RF). Glutamate 57 functions as the Proton acceptor in the catalytic mechanism.

The protein belongs to the glycosyltransferase 68 family.

The protein localises to the endoplasmic reticulum. It catalyses the reaction L-seryl-[protein] + GDP-beta-L-fucose = 3-O-(alpha-L-fucosyl)-L-seryl-[protein] + GDP + H(+). The enzyme catalyses L-threonyl-[protein] + GDP-beta-L-fucose = 3-O-(alpha-L-fucosyl)-L-threonyl-[protein] + GDP + H(+). The protein operates within protein modification; protein glycosylation. Functionally, catalyzes the reaction that attaches fucose through an O-glycosidic linkage to a conserved serine or threonine residue in the consensus sequence C1-X-X-S/T-C2 of thrombospondin type I repeats (TSRs) where C1 and C2 are the first and second cysteines of the repeat, respectively. O-fucosylates sporozoite proteins CSP and TRAP. O-fucosylation regulates stability and intracellular trafficking of TRAP but not of CSP. Probably by regulating protein O-fucosylation, may play a role in parasite transmission to the mosquito vector and/or infection of the vertebrate host hepatocytes; however, POFUT2 involvement in transmission/infection is controversial. This Plasmodium falciparum (isolate NF54) protein is GDP-fucose protein O-fucosyltransferase 2.